The sequence spans 1149 residues: Translocase of chloroplast 126, chloroplastic (1149 aa).

Disordered stretches follow at residues 1-206 (MDAL…GKEL), 219-292 (NMPN…RELT), and 315-431 (LELK…VNPS). The span at 131 to 142 (LYYDDYGDDGEV) shows a compositional bias: acidic residues. A compositionally biased stretch (low complexity) spans 152-168 (TSSSSSSSSSECSSSAS). 2 stretches are compositionally biased toward acidic residues: residues 271-280 (YDQEGEDADS) and 335-357 (GESDADADADADDEDVESGDEHE). A compositionally biased stretch (polar residues) spans 406-429 (TAATDTQSSNAASSTQVAGTTDVN). An AIG1-type G domain is found at 514–743 (DFACTILVLG…KLQDTAAPGR (230 aa)). Residues 523-530 (GKTGVGKS) are G1. Residue 526–531 (GVGKSA) participates in GTP binding. Position 530 (Ser-530) interacts with Mg(2+). The G2 stretch occupies residues 550-554 (STTNV). A G3 region spans residues 570-573 (DTPG). A G4 region spans residues 642 to 645 (THAS). GTP-binding positions include His-643 and 691 to 692 (EN). The segment at 691-693 (ENH) is G5. 2 disordered regions span residues 769-800 (KLPDEQLDESDESDDDEEDEEEGDEYDDLPPF) and 833-869 (KQHREQLQRRKEMKKRATAMRKEGLSHPADEADDEAG). Acidic residues predominate over residues 773–796 (EQLDESDESDDDEEDEEEGDEYDD). 2 stretches are compositionally biased toward basic and acidic residues: residues 833-842 (KQHREQLQRR) and 852-862 (MRKEGLSHPAD). The helical transmembrane segment at 1123 to 1144 (MVLIGIVPILRSLINCRFGFGG) threads the bilayer.

This sequence belongs to the TRAFAC class TrmE-Era-EngA-EngB-Septin-like GTPase superfamily. AIG1/Toc34/Toc159-like paraseptin GTPase family. TOC159 subfamily. Part of the TOC core complex. Requires Mg(2+) as cofactor.

The protein resides in the plastid. It is found in the chloroplast outer membrane. In terms of biological role, GTPase involved in protein precursor import into chloroplasts. Seems to recognize chloroplast-destined precursor proteins and regulate their presentation to the translocation channel through GTP hydrolysis. Probably specialized in the import of nuclear encoded non-photosynthetic preproteins from the cytoplasm to the chloroplast. The protein is Translocase of chloroplast 126, chloroplastic of Physcomitrium patens (Spreading-leaved earth moss).